A 98-amino-acid chain; its full sequence is Leydig cell tumor 10 kDa protein homolog (98 aa).

Disordered stretches follow at residues 1 to 38 (MAQGQRKFQAQKPAKSKAAAAAASARNRGPRKGGRVIA) and 73 to 98 (SLPKKLALLKASTKKKEASSSTKMPA). Residues 16 to 25 (SKAAAAAASA) show a composition bias toward low complexity. Basic residues predominate over residues 28 to 38 (RGPRKGGRVIA). Over residues 73-83 (SLPKKLALLKA) the composition is skewed to low complexity.

This sequence belongs to the UPF0390 family.

May have a potential role in hypercalcemia of malignancy. This Bos taurus (Bovine) protein is Leydig cell tumor 10 kDa protein homolog.